The sequence spans 342 residues: Heat-inducible transcription repressor HrcA (342 aa).

It belongs to the HrcA family.

Negative regulator of class I heat shock genes (grpE-dnaK-dnaJ and groELS operons). Prevents heat-shock induction of these operons. This is Heat-inducible transcription repressor HrcA from Geobacter sulfurreducens (strain ATCC 51573 / DSM 12127 / PCA).